We begin with the raw amino-acid sequence, 304 residues long: Tyrosine recombinase XerC (304 aa).

The Core-binding (CB) domain maps to 6 to 92 (NKLYLQAQAY…VLRQWFAYLV (87 aa)). The 180-residue stretch at 113-292 (HLPKNIDAER…DFQHLAKIYD (180 aa)) folds into the Tyr recombinase domain. Catalysis depends on residues Arg-152, Lys-176, His-244, Arg-247, and His-270. Tyr-279 (O-(3'-phospho-DNA)-tyrosine intermediate) is an active-site residue.

The protein belongs to the 'phage' integrase family. XerC subfamily. In terms of assembly, forms a cyclic heterotetrameric complex composed of two molecules of XerC and two molecules of XerD.

It is found in the cytoplasm. Site-specific tyrosine recombinase, which acts by catalyzing the cutting and rejoining of the recombining DNA molecules. The XerC-XerD complex is essential to convert dimers of the bacterial chromosome into monomers to permit their segregation at cell division. It also contributes to the segregational stability of plasmids. The protein is Tyrosine recombinase XerC of Haemophilus ducreyi (strain 35000HP / ATCC 700724).